The chain runs to 321 residues: Nucleus-vacuole junction protein 1 (321 aa).

A signal peptide spans 1–22 (MTRPPLVRGIFSLGLSVAVLKG). The tract at residues 73–125 (ELSWRKVFNFISRQSSELDARIYVLILLLSFLLPIAWTVLDGDRETTLEDKDN) is TSC13-binding. Residues 94-114 (IYVLILLLSFLLPIAWTVLDG) traverse the membrane as a helical segment. An OSH1-binding region spans residues 139–195 (KHYNDGERAVLQFGKNRSEPIILSYKDMNVLEGEHEFTSKEEHSNSHLTSKSENALS). The residue at position 156 (S156) is a Phosphoserine. A compositionally biased stretch (basic and acidic residues) spans 174–183 (EFTSKEEHSN). The tract at residues 174 to 194 (EFTSKEEHSNSHLTSKSENAL) is disordered. A compositionally biased stretch (polar residues) spans 184–194 (SHLTSKSENAL). S199 is modified (phosphoserine). The segment at 210 to 275 (QLEEDKNEPN…SLKSSTSFPI (66 aa)) is disordered. A VAC8-binding region spans residues 233-321 (DCSSSSEVES…EQAYSQPFRY (89 aa)). Positions 242-262 (SQSKCRKESTAEPDSLSRDTR) are enriched in basic and acidic residues. Over residues 263-272 (TTSSLKSSTS) the composition is skewed to low complexity. Residues S285 and S298 each carry the phosphoserine modification. The segment at 299–321 (PTKSSNLDAQVNTEQAYSQPFRY) is disordered.

As to quaternary structure, interacts with OSH1, TSC13 and VAC8.

Its subcellular location is the nucleus outer membrane. Functionally, involved in the formation of nucleus-vacuole (NV) junctions during piecemeal microautophagy of the nucleus (PMN). NV junctions are interorganelle interfaces mediated by NVJ1 in the nuclear envelope and VAC8 on the vacuole membrane. Together, NVJ1 and VAC8 form Velcro-like patches through which teardrop-like portions of the nucleus are pinched off into the vacuolar lumen and degraded by the PMN process. Also acts as an outer-nuclear membrane receptor for OSH1 and TSC13. This is Nucleus-vacuole junction protein 1 (NVJ1) from Saccharomyces cerevisiae (strain YJM789) (Baker's yeast).